Consider the following 329-residue polypeptide: L-carnitine dehydrogenase (329 aa).

19 to 24 (GAGVIG) serves as a coordination point for NAD(+).

It belongs to the 3-hydroxyacyl-CoA dehydrogenase family. L-carnitine dehydrogenase subfamily. In terms of assembly, homodimer.

The protein resides in the cytoplasm. The catalysed reaction is carnitine + NAD(+) = 3-dehydrocarnitine + NADH + H(+). Its pathway is amine and polyamine metabolism; carnitine metabolism. Its function is as follows. Catalyzes the NAD(+)-dependent oxidation of L-carnitine to 3-dehydrocarnitine. This is L-carnitine dehydrogenase from Nocardiopsis dassonvillei (strain ATCC 23218 / DSM 43111 / CIP 107115 / JCM 7437 / KCTC 9190 / NBRC 14626 / NCTC 10488 / NRRL B-5397 / IMRU 509) (Actinomadura dassonvillei).